The following is a 345-amino-acid chain: Trace amine-associated receptor 6 (345 aa).

The Extracellular portion of the chain corresponds to 1 to 32 (MGSNSSPPAVLQLCYENVNGSCVKTPYSPGPR). The N-linked (GlcNAc...) asparagine glycan is linked to N19. 2 disulfide bridges follow: C22–C186 and C105–C190. Residues 33-53 (VLLYAVFGFGAVLAVFGNLLV) traverse the membrane as a helical segment. Residues 54–68 (MISILHFKQLHSPTN) are Cytoplasmic-facing. The helical transmembrane segment at 69 to 89 (FLIASLACADFWVGVSVMPFS) threads the bilayer. At 90–107 (MVRSIESCWYFGRSFCTF) the chain is on the extracellular side. Residues 108-128 (HTCCDVAFCYSSLFHLSFISI) traverse the membrane as a helical segment. The Cytoplasmic segment spans residues 129 to 147 (DRYIAVTDPLVYPTKFTVS). Residues 148–168 (VSGICISISWILPLAYSGAVF) traverse the membrane as a helical segment. Over 169–202 (YTGVYADGLEEVSDAVNCVGGCQVVVNQNWVLID) the chain is Extracellular. A helical transmembrane segment spans residues 203-223 (FLSFLIPTLVMIILYGNIFLV). Residues 224-259 (ARQQAKKIETVGNKAESSSESYKARVARRERKAAKT) are Cytoplasmic-facing. A helical membrane pass occupies residues 260–276 (LGITVVAFMISWLPYSI). Residues 277–282 (DSLVDA) lie on the Extracellular side of the membrane. Residues 283 to 302 (FMGFITPAYIYEICVWCAYY) traverse the membrane as a helical segment. The Cytoplasmic segment spans residues 303–345 (NSAMNPLIYALFYPWFKKAIKVIMSGQVFKNSSATMNLFSEQI).

The protein belongs to the G-protein coupled receptor 1 family.

The protein resides in the cell membrane. Functionally, olfactory receptor specific for trace amines, such as beta-phenylethylamine (beta-PEA). Trace amine compounds are enriched in animal body fluids and act on trace amine-associated receptors (TAARs) to elicit both intraspecific and interspecific innate behaviors. Beta-PEA-binding causes a conformation change that triggers signaling via G(s)-class of G alpha proteins (GNAL or GNAS). This is Trace amine-associated receptor 6 (Taar6) from Rattus norvegicus (Rat).